Reading from the N-terminus, the 401-residue chain is Argininosuccinate synthase (401 aa).

Residue 8–16 (AYSGGLDTT) coordinates ATP. Tyrosine 87 contributes to the L-citrulline binding site. An ATP-binding site is contributed by glycine 117. The L-aspartate site is built by threonine 119, asparagine 123, and aspartate 124. L-citrulline is bound at residue asparagine 123. Residues arginine 127, serine 175, glutamate 259, and tyrosine 271 each coordinate L-citrulline.

The protein belongs to the argininosuccinate synthase family. Type 1 subfamily. In terms of assembly, homotetramer.

It localises to the cytoplasm. It carries out the reaction L-citrulline + L-aspartate + ATP = 2-(N(omega)-L-arginino)succinate + AMP + diphosphate + H(+). It functions in the pathway amino-acid biosynthesis; L-arginine biosynthesis; L-arginine from L-ornithine and carbamoyl phosphate: step 2/3. This chain is Argininosuccinate synthase, found in Corynebacterium glutamicum (strain ATCC 13032 / DSM 20300 / JCM 1318 / BCRC 11384 / CCUG 27702 / LMG 3730 / NBRC 12168 / NCIMB 10025 / NRRL B-2784 / 534).